The primary structure comprises 795 residues: Phenylalanine--tRNA ligase beta subunit (795 aa).

The tRNA-binding domain maps to 39 to 148 (AGDFSGVVVG…QNAPVGTNLR (110 aa)). One can recognise a B5 domain in the interval 401–476 (PKLNQVSLRR…RIYGYNSIPN (76 aa)). Positions 454, 460, 463, and 464 each coordinate Mg(2+). The FDX-ACB domain occupies 701-794 (SRFPANRRDL…LKQRFNAYLR (94 aa)).

The protein belongs to the phenylalanyl-tRNA synthetase beta subunit family. Type 1 subfamily. In terms of assembly, tetramer of two alpha and two beta subunits. It depends on Mg(2+) as a cofactor.

It is found in the cytoplasm. The enzyme catalyses tRNA(Phe) + L-phenylalanine + ATP = L-phenylalanyl-tRNA(Phe) + AMP + diphosphate + H(+). This chain is Phenylalanine--tRNA ligase beta subunit (pheT), found in Pasteurella multocida (strain Pm70).